The chain runs to 134 residues: Small ribosomal subunit protein bS6 (134 aa).

This sequence belongs to the bacterial ribosomal protein bS6 family.

Functionally, binds together with bS18 to 16S ribosomal RNA. This chain is Small ribosomal subunit protein bS6, found in Pelodictyon phaeoclathratiforme (strain DSM 5477 / BU-1).